The sequence spans 59 residues: Large ribosomal subunit protein bL32 (59 aa).

Residues 1–20 (MAVPKKKTSKGKRNQRHATW) show a composition bias toward basic residues. The disordered stretch occupies residues 1-22 (MAVPKKKTSKGKRNQRHATWKG).

The protein belongs to the bacterial ribosomal protein bL32 family.

This Prochlorococcus marinus (strain NATL1A) protein is Large ribosomal subunit protein bL32.